Reading from the N-terminus, the 258-residue chain is Protein T1 (258 aa).

Positions 1–17 (MRRLCIILLVYVYATFA) are cleaved as a signal peptide. N-linked (GlcNAc...) asparagine; by host glycosylation is found at asparagine 67, asparagine 151, and asparagine 172.

The protein belongs to the poxviruses A41 family.

The chain is Protein T1 from Rabbit fibroma virus (strain Kasza) (RFV).